We begin with the raw amino-acid sequence, 285 residues long: Probable cobalamin biosynthesis protein CobD (285 aa).

The next 4 helical transmembrane spans lie at 10–32 (LIDL…GKVI), 45–67 (YLDF…ILSH), 145–167 (VIAP…RAVN), and 266–283 (VYWI…IILY).

The protein belongs to the CobD/CbiB family.

It localises to the cell membrane. It functions in the pathway cofactor biosynthesis; adenosylcobalamin biosynthesis. Its function is as follows. Converts cobyric acid to cobinamide by the addition of aminopropanol on the F carboxylic group. In Pyrococcus furiosus (strain ATCC 43587 / DSM 3638 / JCM 8422 / Vc1), this protein is Probable cobalamin biosynthesis protein CobD.